The chain runs to 171 residues: Lipoprotein signal peptidase (171 aa).

The next 2 membrane-spanning stretches (helical) occupy residues 67-87 (YALL…LWRS) and 88-108 (TSKL…GNAY). Catalysis depends on residues Asp118 and Asp136. A helical transmembrane segment spans residues 127–147 (FSWYVFNLADAAIVAGVALLL).

This sequence belongs to the peptidase A8 family.

The protein resides in the cell inner membrane. The catalysed reaction is Release of signal peptides from bacterial membrane prolipoproteins. Hydrolyzes -Xaa-Yaa-Zaa-|-(S,diacylglyceryl)Cys-, in which Xaa is hydrophobic (preferably Leu), and Yaa (Ala or Ser) and Zaa (Gly or Ala) have small, neutral side chains.. It functions in the pathway protein modification; lipoprotein biosynthesis (signal peptide cleavage). Functionally, this protein specifically catalyzes the removal of signal peptides from prolipoproteins. The sequence is that of Lipoprotein signal peptidase from Methylocella silvestris (strain DSM 15510 / CIP 108128 / LMG 27833 / NCIMB 13906 / BL2).